The primary structure comprises 227 residues: Orotidine 5'-phosphate decarboxylase (227 aa).

Substrate-binding positions include D8, K30, 59–68, T118, R178, Q187, G207, and R208; that span reads DLKLYDIPYT. K61 acts as the Proton donor in catalysis.

Belongs to the OMP decarboxylase family. Type 1 subfamily. Homodimer.

It catalyses the reaction orotidine 5'-phosphate + H(+) = UMP + CO2. It functions in the pathway pyrimidine metabolism; UMP biosynthesis via de novo pathway; UMP from orotate: step 2/2. Catalyzes the decarboxylation of orotidine 5'-monophosphate (OMP) to uridine 5'-monophosphate (UMP). The polypeptide is Orotidine 5'-phosphate decarboxylase (Helicobacter pylori (strain Shi470)).